The following is an 808-amino-acid chain: MAQILLHGTLHVTIYEVDNLQKEGGGHFFSKIKEHVEETIGFGKGTPAIYATVDLEKARVGRTRKIKNEPNNPRWYESFHIYCAHMASNVIFTVKDDNPIGATLIGRAYVPVEELLEGEEIDKWVEILDREMNPIAEGSKIHVKLQFFDVSRDPNWERGIRSSKYPGVPYTFFAQRTGCRVSLYQDAHVPDNFIPKIPLSGGKYYEPHRCWEDIFDAIINAKHLIYITGWSVYTEITLVRDSRRQKPGGDITLGELLKKKASEGVKVLMLVWDDRTSVGLLKKDGLMATHDQETEQFFQGTEVNCVLCPRNPDDGGSIVQSLQIGTMFTHHQKIVVVDSELPSGESEKRRILSFVGGIDLCDGRYDTPFHSLFRTLDTAHHDDFHQPNFPDGAITKGGPREPWHDIHSRLEGPIAWDVLFNFEQRWRKQGGKDVLVNFRELDDIIIPPSPVMHLDDSETWNVQLFRSIDEGAAFGFPETPEDAAKAGLVSGXDNIIDRSIQDAYIHAIRRAKNFIYIENQYFLGSSYDWQSDDIKVEDIGALHVIPKELALKIVSKIEAGERFTVYVVVPMWPEGIPESASVQAILDWQRRTMEMMYKHIVQALNAKGIEEDPRNYLTFFCIGNREVKKSGAYEPSETPEPDSDYIRAQEARRFMIYVHSKMMIVDDEYIIVGSANINQRSMDGARDSEIAMGAYQPHHLATREPARGQIHGFRMALWYEHLGMLDETFLHPESEECVSKVNRMADKYWDLYSSESLERDLPGHLLRYPIGVASEGDVTELPGAEHFPDTKARVLGTKSDYLPPILTT.

Residues 1–125 (MAQILLHGTL…LEGEEIDKWV (125 aa)) form the C2 domain. Aspartate 186 contributes to the Ca(2+) binding site. A PLD phosphodiesterase 1 domain is found at 326–364 (TMFTHHQKIVVVDSELPSGESEKRRILSFVGGIDLCDGR). Catalysis depends on residues histidine 331, lysine 333, and aspartate 338. An a 1,2-diacyl-sn-glycero-3-phosphate-binding site is contributed by histidine 331. The Ca(2+) site is built by histidine 370 and histidine 404. The a 1,2-diacyl-sn-glycero-3-phosphate site is built by glutamine 520 and histidine 659. A PLD phosphodiesterase 2 domain is found at 654–681 (FMIYVHSKMMIVDDEYIIVGSANINQRS). Residues histidine 659, lysine 661, and aspartate 666 contribute to the active site. Glutamate 720 is a binding site for Ca(2+).

This sequence belongs to the phospholipase D family. C2-PLD subfamily. The cofactor is Ca(2+).

The enzyme catalyses a 1,2-diacyl-sn-glycero-3-phosphocholine + H2O = a 1,2-diacyl-sn-glycero-3-phosphate + choline + H(+). Hydrolyzes glycerol-phospholipids at the terminal phosphodiesteric bond. Plays an important role in various cellular processes. In Nicotiana tabacum (Common tobacco), this protein is Phospholipase D alpha 1 (PLD1).